Here is a 159-residue protein sequence, read N- to C-terminus: NADH-quinone oxidoreductase subunit I (159 aa).

2 consecutive 4Fe-4S ferredoxin-type domains span residues 51-80 (RRYESGEERCIACKLCEAICPAQAIVIEAD) and 90-119 (TRYDIDMTKCIYCGLCQEACPVDAIVEGPN). Positions 60, 63, 66, 70, 99, 102, 105, and 109 each coordinate [4Fe-4S] cluster.

It belongs to the complex I 23 kDa subunit family. NDH-1 is composed of 14 different subunits. Subunits NuoA, H, J, K, L, M, N constitute the membrane sector of the complex. [4Fe-4S] cluster serves as cofactor.

The protein localises to the cell inner membrane. The enzyme catalyses a quinone + NADH + 5 H(+)(in) = a quinol + NAD(+) + 4 H(+)(out). Its function is as follows. NDH-1 shuttles electrons from NADH, via FMN and iron-sulfur (Fe-S) centers, to quinones in the respiratory chain. The immediate electron acceptor for the enzyme in this species is believed to be ubiquinone. Couples the redox reaction to proton translocation (for every two electrons transferred, four hydrogen ions are translocated across the cytoplasmic membrane), and thus conserves the redox energy in a proton gradient. The protein is NADH-quinone oxidoreductase subunit I of Rickettsia akari (strain Hartford).